Consider the following 415-residue polypeptide: Probable G-protein coupled receptor 19 (415 aa).

The Extracellular segment spans residues 1–69; it reads MVFAHRMDND…LNPGEVATAS (69 aa). N-linked (GlcNAc...) asparagine glycans are attached at residues N25 and N52. The chain crosses the membrane as a helical span at residues 70 to 90; sequence IFFGALWLFSIFGNSLVCLVI. Residues 91–102 lie on the Cytoplasmic side of the membrane; the sequence is HRSRRTQSTTNY. Residues 103-123 traverse the membrane as a helical segment; it reads FVVSMACADLLISVASTPFVV. Topologically, residues 124-152 are extracellular; sequence LQFTTGRWTLGSAMCKVVRYFQYLTPGVQ. Cysteines 138 and 210 form a disulfide. A helical transmembrane segment spans residues 153–173; the sequence is IYVLLSICIDRFYTIVYPLSF. The Cytoplasmic segment spans residues 174–182; sequence KVSREKAKK. Residues 183 to 203 form a helical membrane-spanning segment; it reads MIAASWILDAAFVTPVFFFYG. Topologically, residues 204 to 221 are extracellular; the sequence is SNWDSHCNYFLPPSWEGT. A helical membrane pass occupies residues 222–242; it reads AYTVIHFLVGFVIPSILIILF. At 243–277 the chain is on the cytoplasmic side; it reads YQKVIKYIWRIGTDGRTLRRTMNIVPRTKVKTVKM. A helical membrane pass occupies residues 278 to 298; it reads FLLLNLVFLFSWLPFHVAQLW. Over 299–309 the chain is Extracellular; that stretch reads HPHEQDYKKSS. A helical membrane pass occupies residues 310-332; it reads LVFTAVTWVSFSSSASKPTLYSI. Residues 333-415 are Cytoplasmic-facing; sequence YNANFRRGMK…INSNPPNTFV (83 aa).

Belongs to the G-protein coupled receptor 1 family. As to expression, strongly expressed in the brain.

It localises to the cell membrane. G-protein coupled receptor that plays a role in the regulation of circadian rhythms and energy metabolism. Participates in maintaining proper circadian gene expression in the suprachiasmatic nucleus (SCN), the locus of the master circadian clock in the brain. May function as a coordinator of aging-associated metabolic dysfunction, stress response, DNA integrity management, and eventual senescence. Upon binding to adropin, modulates mitochondrial energy metabolism via the p44/42-PDK4 signaling pathway, influencing pyruvate dehydrogenase activity. This chain is Probable G-protein coupled receptor 19 (Gpr19), found in Mus musculus (Mouse).